The chain runs to 218 residues: Large ribosomal subunit protein mL54 (218 aa).

This sequence belongs to the mitochondrion-specific ribosomal protein mL54 family. As to quaternary structure, component of the mitochondrial large ribosomal subunit (mt-LSU). Mature N.crassa 74S mitochondrial ribosomes consist of a small (37S) and a large (54S) subunit. The 37S small subunit contains a 16S ribosomal RNA (16S mt-rRNA) and 32 different proteins. The 54S large subunit contains a 23S rRNA (23S mt-rRNA) and 42 different proteins.

It is found in the mitochondrion. Its function is as follows. Component of the mitochondrial ribosome (mitoribosome), a dedicated translation machinery responsible for the synthesis of mitochondrial genome-encoded proteins, including at least some of the essential transmembrane subunits of the mitochondrial respiratory chain. The mitoribosomes are attached to the mitochondrial inner membrane and translation products are cotranslationally integrated into the membrane. The protein is Large ribosomal subunit protein mL54 (mrpl37) of Neurospora crassa (strain ATCC 24698 / 74-OR23-1A / CBS 708.71 / DSM 1257 / FGSC 987).